The following is a 791-amino-acid chain: Linear element protein rec10 (791 aa).

2 disordered regions span residues 462-523 (NSVP…AKSN) and 644-672 (LLDG…TLIS). The Nuclear localization signal signature appears at 485 to 492 (QRRKDGKF). Residues 493 to 503 (AKSTKRKKQKS) show a composition bias toward basic residues. Positions 644–657 (LLDGTCSSPPNNEC) are enriched in polar residues.

Component of linear elements (LinEs), which are similar to synaptonemal complexes, at least composed of rec27, rec25, rec10 and mug20. Interacts with rec25; the interaction is direct. Interacts with hop1 (via N-terminus); the interaction is direct. Interacts with rec15 (via C-terminus); the interaction is direct.

The protein resides in the nucleus. Its subcellular location is the chromosome. Organizes linear element components on chromosomes and is thus required for meiotic DNA recombination. In Schizosaccharomyces pombe (strain 972 / ATCC 24843) (Fission yeast), this protein is Linear element protein rec10.